The chain runs to 220 residues: Ribosomal RNA large subunit methyltransferase E (220 aa).

Residues Gly-60, Trp-62, Asp-92, Asp-108, and Asp-133 each coordinate S-adenosyl-L-methionine. Residue Lys-173 is the Proton acceptor of the active site.

It belongs to the class I-like SAM-binding methyltransferase superfamily. RNA methyltransferase RlmE family.

It localises to the cytoplasm. The enzyme catalyses uridine(2552) in 23S rRNA + S-adenosyl-L-methionine = 2'-O-methyluridine(2552) in 23S rRNA + S-adenosyl-L-homocysteine + H(+). Its function is as follows. Specifically methylates the uridine in position 2552 of 23S rRNA at the 2'-O position of the ribose in the fully assembled 50S ribosomal subunit. This chain is Ribosomal RNA large subunit methyltransferase E, found in Paraburkholderia phymatum (strain DSM 17167 / CIP 108236 / LMG 21445 / STM815) (Burkholderia phymatum).